A 368-amino-acid polypeptide reads, in one-letter code: C-glycoside deglycosidase alpha subunit (368 aa).

Glu145 serves as a coordination point for a divalent metal cation. His147 functions as the Proton acceptor in the catalytic mechanism. Asp177, His275, and Glu311 together coordinate a divalent metal cation.

The protein belongs to the C-glycoside deglycosidase alpha subunit family. In terms of assembly, heterodimer composed of an alpha subunit (CarB) and a beta subunit (CarC). The cofactor is a divalent metal cation.

It carries out the reaction 3''-dehydroisovitexin = 1,5-anhydro-D-erythro-hex-1-en-3-ulose + apigenin. The catalysed reaction is 3''-dehydroisoorientin = 1,5-anhydro-D-erythro-hex-1-en-3-ulose + luteolin. Carbon-carbon bond-cleaving enzyme which participates in the metabolism of C-glycosides. Acts on the C6-glycosylated compounds 3''-dehydroisovitexin (3''-oxo-isovitexin) and 3''-dehydroisoorientin (3''-oxo-homoorientin). Shows weak activity with 3'-dehydromangiferin (3'-oxo-mangiferin). The polypeptide is C-glycoside deglycosidase alpha subunit (Microbacterium trichothecenolyticum (Aureobacterium trichothecenolyticum)).